The chain runs to 185 residues: Ribosome-recycling factor (185 aa).

The protein belongs to the RRF family.

It is found in the cytoplasm. In terms of biological role, responsible for the release of ribosomes from messenger RNA at the termination of protein biosynthesis. May increase the efficiency of translation by recycling ribosomes from one round of translation to another. This is Ribosome-recycling factor from Xanthomonas oryzae pv. oryzae (strain MAFF 311018).